Here is a 140-residue protein sequence, read N- to C-terminus: Sex-regulated protein janus-B (140 aa).

Position 42 (arginine 42) interacts with substrate. Catalysis depends on histidine 69, which acts as the Proton acceptor. 110-112 (SRT) contacts substrate.

Belongs to the janus family. Germline cells of adult males.

In terms of biological role, janA and janB regulate somatic sex differentiation. This Drosophila melanogaster (Fruit fly) protein is Sex-regulated protein janus-B (janB).